The following is a 540-amino-acid chain: Arylsulfatase K (540 aa).

A signal peptide spans 1–22 (MLLLWVSVVAASALAAPAPGAD). Residues Asp-44 and Cys-84 each coordinate Ca(2+). Residue Cys-84 is the Nucleophile of the active site. Cys-84 is modified (3-oxoalanine (Cys)). N-linked (GlcNAc...) asparagine glycosylation occurs at Asn-112. Residue Lys-132 coordinates substrate. Asn-197 carries N-linked (GlcNAc...) asparagine glycosylation. Substrate is bound at residue His-255. Asn-266 is a glycosylation site (N-linked (GlcNAc...) asparagine). Asp-317 and His-318 together coordinate Ca(2+). N-linked (GlcNAc...) asparagine glycans are attached at residues Asn-379, Asn-417, and Asn-502.

Belongs to the sulfatase family. Requires Ca(2+) as cofactor. The conversion to 3-oxoalanine (also known as C-formylglycine, FGly), of a serine or cysteine residue in prokaryotes and of a cysteine residue in eukaryotes, is critical for catalytic activity. In terms of processing, the 75-kDa precursor undergoes proteolytic processing to yield a 23 kDa form. Post-translationally, N-glycosylated with both high mannose and complex type sugars.

It localises to the secreted. It is found in the lysosome. It carries out the reaction an aryl sulfate + H2O = a phenol + sulfate + H(+). The enzyme catalyses Hydrolysis of the 2-sulfate groups of the 2-O-sulfo-D-glucuronate residues of chondroitin sulfate, heparin and heparitin sulfate.. In terms of biological role, catalyzes the hydrolysis of pseudosubstrates such as p-nitrocatechol sulfate and p-nitrophenyl sulfate. Catalyzes the hydrolysis of the 2-sulfate groups of the 2-O-sulfo-D-glucuronate residues of chondroitin sulfate, heparin and heparitin sulfate. Acts selectively on 2-sulfoglucuronate and lacks activity against 2-sulfoiduronate. The chain is Arylsulfatase K (ARSK) from Bos taurus (Bovine).